The primary structure comprises 1799 residues: Putative neural-cadherin 2 (1799 aa).

N-linked (GlcNAc...) asparagine glycosylation is found at Asn-13, Asn-64, Asn-86, Asn-118, Asn-195, Asn-260, Asn-264, Asn-283, and Asn-377. Cadherin domains lie at 37–136 (DRFL…PPVF), 137–252 (DRQT…APQF), 253–364 (PQGI…PPQF), 368–485 (EWVT…VPKF), 486–590 (DREH…APTF), 590–709 (FAQD…QPGS), and 708–812 (GSKS…AGSM). Residues Asn-601, Asn-793, Asn-910, Asn-948, and Asn-969 are each glycosylated (N-linked (GlcNAc...) asparagine). The EGF-like 1 domain occupies 973 to 1010 (QDHNCRTHLCYNGGRCVETRNGPKCVACPVGYNGPRCQ). 7 disulfides stabilise this stretch: Cys-977–Cys-988, Cys-982–Cys-997, Cys-1000–Cys-1009, Cys-1191–Cys-1217, Cys-1224–Cys-1239, Cys-1233–Cys-1248, and Cys-1250–Cys-1259. The region spanning 1011–1217 (QSTRSFRGNG…ALARNSFPAC (207 aa)) is the Laminin G-like 1 domain. The 41-residue stretch at 1220–1260 (TDEVCLKTEHTARCWEHGNCVASLVQAKCHCQPGWMGPGCN) folds into the EGF-like 2 domain. A Laminin G-like 2 domain is found at 1263 to 1454 (TIPTTFKAQS…TMARNLERNC (192 aa)). Asn-1376 and Asn-1437 each carry an N-linked (GlcNAc...) asparagine glycan. 4 disulfide bridges follow: Cys-1419-Cys-1454, Cys-1501-Cys-1512, Cys-1506-Cys-1523, and Cys-1525-Cys-1534. The 39-residue stretch at 1497 to 1535 (DRNECLDLPCLNGATCINLEPRLRYRCICPEGYWGENCE) folds into the EGF-like 3; calcium-binding domain. Residues 1549–1569 (ALGAIFVCLIIILILALIFVL) traverse the membrane as a helical segment. The segment at 1726–1799 (ASSQLPSDGG…PLPEVDKVVL (74 aa)) is disordered. Composition is skewed to gly residues over residues 1733 to 1744 (DGGGGSGDGPGP), 1752 to 1763 (LGGGGTGGGSGI), and 1775 to 1786 (SGAGPGGGGGSS).

Its subcellular location is the cell membrane. In terms of biological role, cadherins are calcium-dependent cell adhesion proteins. They preferentially interact with themselves in a homophilic manner in connecting cells. In Drosophila melanogaster (Fruit fly), this protein is Putative neural-cadherin 2 (CadN2).